The sequence spans 397 residues: Acetate kinase (397 aa).

Residue Asn7 coordinates Mg(2+). Position 14 (Lys14) interacts with ATP. Arg90 provides a ligand contact to substrate. Asp147 (proton donor/acceptor) is an active-site residue. ATP-binding positions include 207–211 (HLGNG), 282–284 (DFR), and 330–334 (GLGEN). Glu383 contacts Mg(2+).

This sequence belongs to the acetokinase family. In terms of assembly, homodimer. Requires Mg(2+) as cofactor. It depends on Mn(2+) as a cofactor.

It localises to the cytoplasm. The enzyme catalyses acetate + ATP = acetyl phosphate + ADP. It participates in metabolic intermediate biosynthesis; acetyl-CoA biosynthesis; acetyl-CoA from acetate: step 1/2. In terms of biological role, catalyzes the formation of acetyl phosphate from acetate and ATP. Can also catalyze the reverse reaction. The polypeptide is Acetate kinase (Clostridium botulinum (strain Kyoto / Type A2)).